The chain runs to 458 residues: PH domain-containing protein DDB_G0274775 (458 aa).

Residues 15-112 form the PH domain; that stretch reads PSDREGWLTK…WMESIKRNLD (98 aa). Residues 111 to 154 are disordered; sequence LDGEGGMKSGGNDIVSSPKINSEPTPKVNQNGSAPEKSSLSSPR. Residues 124–142 show a composition bias toward polar residues; the sequence is IVSSPKINSEPTPKVNQNG. Positions 143-154 are enriched in low complexity; sequence SAPEKSSLSSPR.

The polypeptide is PH domain-containing protein DDB_G0274775 (Dictyostelium discoideum (Social amoeba)).